The chain runs to 210 residues: Na(+)-translocating NADH-quinone reductase subunit D (210 aa).

The next 6 helical transmembrane spans lie at 14–34, 42–62, 72–92, 103–123, 131–151, and 178–198; these read PIIS…ALAV, LVMT…ISMI, IIVQ…VLQA, VFVG…AYAM, FMDG…VGFV, and NGLL…IWII.

This sequence belongs to the NqrDE/RnfAE family. In terms of assembly, composed of six subunits; NqrA, NqrB, NqrC, NqrD, NqrE and NqrF.

The protein localises to the cell inner membrane. It carries out the reaction a ubiquinone + n Na(+)(in) + NADH + H(+) = a ubiquinol + n Na(+)(out) + NAD(+). In terms of biological role, NQR complex catalyzes the reduction of ubiquinone-1 to ubiquinol by two successive reactions, coupled with the transport of Na(+) ions from the cytoplasm to the periplasm. NqrA to NqrE are probably involved in the second step, the conversion of ubisemiquinone to ubiquinol. The protein is Na(+)-translocating NADH-quinone reductase subunit D of Shewanella loihica (strain ATCC BAA-1088 / PV-4).